The sequence spans 56 residues: UPF0391 membrane protein Jann_3570 (56 aa).

The next 2 helical transmembrane spans lie at 4–24 and 29–48; these read WAVT…GGIA and GIAQ…SLVA.

This sequence belongs to the UPF0391 family.

The protein resides in the cell membrane. The protein is UPF0391 membrane protein Jann_3570 of Jannaschia sp. (strain CCS1).